The following is a 150-amino-acid chain: Large ribosomal subunit protein bL9 (150 aa).

The protein belongs to the bacterial ribosomal protein bL9 family.

Functionally, binds to the 23S rRNA. This chain is Large ribosomal subunit protein bL9, found in Streptococcus pyogenes serotype M6 (strain ATCC BAA-946 / MGAS10394).